Consider the following 203-residue polypeptide: Acid phosphatase (203 aa).

H13 acts as the Tele-phosphohistidine intermediate in catalysis. Catalysis depends on E85, which acts as the Proton donor/acceptor.

It belongs to the phosphoglycerate mutase family. Homodimer.

The enzyme catalyses a phosphate monoester + H2O = an alcohol + phosphate. It catalyses the reaction beta-D-fructose 1,6-bisphosphate + H2O = beta-D-fructose 6-phosphate + phosphate. It functions in the pathway carbohydrate biosynthesis; gluconeogenesis. Its activity is regulated as follows. In contrast to classical FBPases, is resistant to inhibition by lithium. Its function is as follows. Phosphatase with a broad specificity. Can dephosphorylate a variety of substrates including phosphorylated sugars like fructose-6-phosphate (F6P). Is able to function in vivo as a fructose-1,6-bisphosphatase (FBPase) and to maintain gluconeogenesis when the classical FBPase GlpX is absent. Shows negligible phosphoglycerate mutase activity. Has no phosphatase activity against 3-phosphoglycerate, 2,3-bisphosphoglycerate, or hydrophobic substrates such as alpha-napthyl phosphate. In Mycobacterium tuberculosis (strain ATCC 25618 / H37Rv), this protein is Acid phosphatase.